We begin with the raw amino-acid sequence, 923 residues long: Helicase POLQ-like (923 aa).

The interval 1 to 84 is disordered; that stretch reads MNRTPIRRCK…STVTPIQQKI (84 aa). Positions 43 to 55 are enriched in low complexity; the sequence is STSPQSPSSSTEN. Residues 178 to 349 form the Helicase ATP-binding domain; sequence DKRLLDGENC…ALRAFVYSTN (172 aa). 191 to 198 contacts ATP; that stretch reads LPTGAGKT. Residues 295–298 carry the DEAH box motif; it reads DELH. Residues 392 to 596 form the Helicase C-terminal domain; the sequence is GICQLLAKLI…CVVLKLAENI (205 aa).

Belongs to the helicase family. SKI2 subfamily.

It is found in the nucleus. The protein localises to the chromosome. The catalysed reaction is Couples ATP hydrolysis with the unwinding of duplex DNA by translocating in the 3'-5' direction.. It carries out the reaction ATP + H2O = ADP + phosphate + H(+). Its function is as follows. Single-stranded 3'-5' DNA helicase that plays a key role in homology-driven double-strand break (DSB) repair. Involved in different DSB repair mechanisms that are guided by annealing of extensive stretches of complementary bases at break ends, such as microhomology-mediated end-joining (MMEJ), single-strand annealing (SSA) or synthesis-dependent strand annealing (SDSA). In Caenorhabditis elegans, this protein is Helicase POLQ-like.